Consider the following 301-residue polypeptide: NAD kinase (301 aa).

Asp-73 (proton acceptor) is an active-site residue. Residues Asp-73–Gly-74, Asn-160–Glu-161, Arg-188, Asp-190, Ala-198, Thr-201–Ser-206, Ala-225, and Gln-257 contribute to the NAD(+) site.

This sequence belongs to the NAD kinase family. It depends on a divalent metal cation as a cofactor.

The protein resides in the cytoplasm. It carries out the reaction NAD(+) + ATP = ADP + NADP(+) + H(+). In terms of biological role, involved in the regulation of the intracellular balance of NAD and NADP, and is a key enzyme in the biosynthesis of NADP. Catalyzes specifically the phosphorylation on 2'-hydroxyl of the adenosine moiety of NAD to yield NADP. The chain is NAD kinase from Helicobacter hepaticus (strain ATCC 51449 / 3B1).